A 138-amino-acid polypeptide reads, in one-letter code: ATP synthase epsilon chain 1 (138 aa).

It belongs to the ATPase epsilon chain family. As to quaternary structure, F-type ATPases have 2 components, CF(1) - the catalytic core - and CF(0) - the membrane proton channel. CF(1) has five subunits: alpha(3), beta(3), gamma(1), delta(1), epsilon(1). CF(0) has three main subunits: a, b and c.

The protein resides in the cell inner membrane. In terms of biological role, produces ATP from ADP in the presence of a proton gradient across the membrane. This is ATP synthase epsilon chain 1 from Syntrophotalea carbinolica (strain DSM 2380 / NBRC 103641 / GraBd1) (Pelobacter carbinolicus).